Consider the following 480-residue polypeptide: Ribulose bisphosphate carboxylase large chain (480 aa).

Residues 1–2 (MS) constitute a propeptide that is removed on maturation. Position 3 is an N-acetylproline (Pro3). Lys14 carries the N6,N6,N6-trimethyllysine modification. Residues Asn123 and Thr173 each contribute to the substrate site. The active-site Proton acceptor is Lys175. Residue Lys177 coordinates substrate. Residues Lys201, Asp203, and Glu204 each contribute to the Mg(2+) site. The residue at position 201 (Lys201) is an N6-carboxylysine. The active-site Proton acceptor is His294. Arg295, His327, and Ser379 together coordinate substrate.

It belongs to the RuBisCO large chain family. Type I subfamily. Heterohexadecamer of 8 large chains and 8 small chains; disulfide-linked. The disulfide link is formed within the large subunit homodimers. Mg(2+) serves as cofactor. Post-translationally, the disulfide bond which can form in the large chain dimeric partners within the hexadecamer appears to be associated with oxidative stress and protein turnover.

Its subcellular location is the plastid. The protein localises to the chloroplast. It carries out the reaction 2 (2R)-3-phosphoglycerate + 2 H(+) = D-ribulose 1,5-bisphosphate + CO2 + H2O. It catalyses the reaction D-ribulose 1,5-bisphosphate + O2 = 2-phosphoglycolate + (2R)-3-phosphoglycerate + 2 H(+). Its function is as follows. RuBisCO catalyzes two reactions: the carboxylation of D-ribulose 1,5-bisphosphate, the primary event in carbon dioxide fixation, as well as the oxidative fragmentation of the pentose substrate in the photorespiration process. Both reactions occur simultaneously and in competition at the same active site. In Basella alba (Malabar spinach), this protein is Ribulose bisphosphate carboxylase large chain.